A 498-amino-acid polypeptide reads, in one-letter code: Probable deoxyguanosinetriphosphate triphosphohydrolase (498 aa).

In terms of domain architecture, HD spans 71-262 (RLTHSLEVQQ…MEAADDISYC (192 aa)).

Belongs to the dGTPase family. Type 1 subfamily. The cofactor is Mg(2+).

The enzyme catalyses dGTP + H2O = 2'-deoxyguanosine + triphosphate + H(+). Functionally, dGTPase preferentially hydrolyzes dGTP over the other canonical NTPs. The polypeptide is Probable deoxyguanosinetriphosphate triphosphohydrolase (Pseudomonas aeruginosa (strain ATCC 15692 / DSM 22644 / CIP 104116 / JCM 14847 / LMG 12228 / 1C / PRS 101 / PAO1)).